The primary structure comprises 555 residues: 1,3-beta-glucanosyltransferase GAS2 (555 aa).

The N-terminal stretch at 1–24 is a signal peptide; it reads MNKKQNFYAAIIVAIFLCLQLSHG. An intrachain disulfide couples C89 to C118. (1,3-beta-D-glucosyl)n is bound by residues Y107, 134–142, N175, E176, D217, and R222; that span reads SEPDISINR. The active-site Proton donor is the E176. 6 cysteine pairs are disulfide-bonded: C231–C367, C247–C278, C390–C442, C392–C489, C399–C466, and C419–C424. E275 acts as the Nucleophile in catalysis. Y307 is a binding site for (1,3-beta-D-glucosyl)n. N498 carries an N-linked (GlcNAc...) asparagine glycan. D531 carries GPI-anchor amidated aspartate lipidation. The propeptide at 532–555 is removed in mature form; that stretch reads GTIAFKTSGFVILLISMIAAGILL.

It belongs to the glycosyl hydrolase 72 family. Post-translationally, N-glycosylated.

The protein localises to the cell membrane. Its function is as follows. Splits internally a 1,3-beta-glucan molecule and transfers the newly generated reducing end (the donor) to the non-reducing end of another 1,3-beta-glucan molecule (the acceptor) forming a 1,3-beta linkage, resulting in the elongation of 1,3-beta-glucan chains in the cell wall. Involved in spore wall assembly. This Saccharomyces cerevisiae (strain ATCC 204508 / S288c) (Baker's yeast) protein is 1,3-beta-glucanosyltransferase GAS2 (GAS2).